The following is a 91-amino-acid chain: Small ribosomal subunit protein uS19 (91 aa).

It belongs to the universal ribosomal protein uS19 family.

Protein S19 forms a complex with S13 that binds strongly to the 16S ribosomal RNA. The protein is Small ribosomal subunit protein uS19 of Pseudomonas syringae pv. tomato (strain ATCC BAA-871 / DC3000).